A 489-amino-acid polypeptide reads, in one-letter code: Bridging integrator 2 (489 aa).

The 217-residue stretch at Val-28–Asn-244 folds into the BAR domain. Low complexity predominate over residues Gln-267–Thr-302. The tract at residues Gln-267–Leu-489 is disordered. The residue at position 273 (Ser-273) is a Phosphoserine. Residues Gly-311–Gln-331 are compositionally biased toward acidic residues. Ser-357 bears the Phosphoserine mark. Positions Gln-358–Ser-368 are enriched in low complexity. Phosphoserine is present on residues Ser-380, Ser-392, Ser-420, Ser-422, Ser-424, Ser-430, Ser-435, Ser-439, and Ser-443.

As to quaternary structure, homodimer. Interacts with BIN1. Interacts with ARHGEF6 (via SH3 domain), ARHGEF7 (via SH3 domain), SH3GL1, SH3GL2 and SH3GL3. Identified in a complex with ARHGEF6 and GIT2.

It localises to the cytoplasm. Its subcellular location is the cell projection. It is found in the podosome membrane. The protein localises to the cell cortex. The protein resides in the phagocytic cup. Functionally, promotes cell motility and migration, probably via its interaction with the cell membrane and with podosome proteins that mediate interaction with the cytoskeleton. Modulates membrane curvature and mediates membrane tubulation. Inhibits phagocytosis. Plays a role in podosome formation. This chain is Bridging integrator 2 (Bin2), found in Mus musculus (Mouse).